Here is a 111-residue protein sequence, read N- to C-terminus: 2Fe-2S ferredoxin (111 aa).

Residues 1 to 104 (MPKIFFLPHK…DIEVQIPLYN (104 aa)) enclose the 2Fe-2S ferredoxin-type domain. The [2Fe-2S] cluster site is built by cysteine 42, cysteine 48, cysteine 51, and cysteine 87.

This sequence belongs to the adrenodoxin/putidaredoxin family. [2Fe-2S] cluster serves as cofactor.

Functionally, ferredoxin are iron-sulfur proteins that transfer electrons in a wide variety of metabolic reactions. The protein is 2Fe-2S ferredoxin (fdx) of Buchnera aphidicola subsp. Schizaphis graminum (strain Sg).